The primary structure comprises 601 residues: MKLSIISAAFLVAITHAASIKFNVIAPNATDVKVSVNGQQVTLTASDANVPYFTGSAEVGASKTYKYVAGGTEESFDRSLDGITNSTLNDFYNRPVTYANLPQLPWPIEKDPQWTRSGSKADIFDDNYIPSVFFHGDDSQVQNVVKNVPADRISGTLTFIGSNYVYSFQNVSFGIHGAGKKHNNAKQSWNWILSGSDTMGNRNFFKLRHMEEDPTQIRERLYSDILHAMGTYANDATMVRLFINNQGFGTFNMLDDITQFSYINAKFYNGKPPATLGPLYDGASGADFLYHPGNLDGYSSWVANTANPNGEAYEALDPLCKAWNETTYTDNTAIANFEKMFDLDRFMRFMVIEYLTADWDGYWMGQTNDGAYRDPTDNNKWYFLDQDFDGTFGVNLAAPEGNAFLDVSYKDFPSRYPGAVMINNLLQNADKKATFEKYLTETVRVLFNNVTLTNRVLALHNFLLPDLEWDRSIVQQSPGINFGWTFDQVTQNLWQGVTAPNNNGGGAAFGLVEYIAAKAQAVAKEFNISIVSQPVGPPSANGTTAAAPAPAAGNSTGKGGNQSISSSASSNKTSAQSTSGASRSKTAPIVLAISALALLVF.

The N-terminal stretch at 1–17 is a signal peptide; sequence MKLSIISAAFLVAITHA. N-linked (GlcNAc...) asparagine glycans are attached at residues asparagine 28, asparagine 85, asparagine 170, asparagine 324, asparagine 449, asparagine 527, asparagine 541, asparagine 554, asparagine 561, and asparagine 571. Low complexity predominate over residues 539-579; it reads SANGTTAAAPAPAAGNSTGKGGNQSISSSASSNKTSAQSTS. The tract at residues 539–581 is disordered; it reads SANGTTAAAPAPAAGNSTGKGGNQSISSSASSNKTSAQSTSGA. Serine 579 carries the GPI-anchor amidated serine lipid modification. The propeptide at 580–601 is removed in mature form; it reads GASRSKTAPIVLAISALALLVF.

As to quaternary structure, interacts with HSPA5/BiP on the cell surface of host nasal epithelial cells.

The protein resides in the cell membrane. Functionally, promotes invasion of host epithelial cells by adhering to receptors on the host cell surface to facilitate endocytosis of the pathogen into host cells. Binds HSPA5/BiP protein on the cell surface of host nasal epithelial cells. This is Invasin CotH3 from Rhizopus delemar (strain RA 99-880 / ATCC MYA-4621 / FGSC 9543 / NRRL 43880) (Mucormycosis agent).